We begin with the raw amino-acid sequence, 528 residues long: Tubulin-specific chaperone E (528 aa).

A CAP-Gly domain is found at 27-71 (GLVPPVAGLWLGVEWDNPERGKHDGSHEGTVYFKCRHPTAGSFIR). LRR repeat units follow at residues 152–176 (CPNIRSIDLSKNLLSSWEEVIDIAD), 178–206 (LKHLEVLNLSENKLTSPSSSPSPTGTFPT), 207–229 (LKVLVLNRTGVTWAEVLRCASGW), 231–253 (VLEKLYLESNNIIISERPTDVLQ), 254–274 (TVKLLDLSSNQLIDENQLFLI), 279–300 (RLEQLILSDIGISSIHFPDAGI), and 309–330 (SLQYLVLNDNQIAQWSFMNELD). Residues 343-385 (NPLTEGSKDAQTTRQFIIARIGQLRTLNKCAIEPEERRGAELD) form the LRRCT domain. Lysine 464 bears the N6-acetyllysine mark. Serine 496 carries the phosphoserine modification.

This sequence belongs to the TBCE family. Supercomplex made of cofactors A to E. Cofactors A and D function by capturing and stabilizing tubulin in a quasi-native conformation. Cofactor E binds to the cofactor D-tubulin complex; interaction with cofactor C then causes the release of tubulin polypeptides that are committed to the native state. Cofactors B and E can form a heterodimer which binds to alpha-tubulin and enhances their ability to dissociate tubulin heterodimers. Interacts with TBCD.

It localises to the cytoplasm. Its subcellular location is the cytoskeleton. Its function is as follows. Tubulin-folding protein; involved in the second step of the tubulin folding pathway and in the regulation of tubulin heterodimer dissociation. Required for correct organization of microtubule cytoskeleton and mitotic splindle, and maintenance of the neuronal microtubule network. This chain is Tubulin-specific chaperone E (TBCE), found in Bos taurus (Bovine).